A 139-amino-acid chain; its full sequence is ATP synthase epsilon chain (139 aa).

Belongs to the ATPase epsilon chain family. F-type ATPases have 2 components, CF(1) - the catalytic core - and CF(0) - the membrane proton channel. CF(1) has five subunits: alpha(3), beta(3), gamma(1), delta(1), epsilon(1). CF(0) has three main subunits: a, b and c.

The protein resides in the cell inner membrane. Produces ATP from ADP in the presence of a proton gradient across the membrane. This chain is ATP synthase epsilon chain, found in Actinobacillus pleuropneumoniae serotype 5b (strain L20).